The chain runs to 373 residues: Spore germination protein KB (373 aa).

The next 10 membrane-spanning stretches (helical) occupy residues 11–31 (LFVM…PGSM), 37–57 (WIAV…YQGI), 78–98 (LSWL…ARVL), 105–125 (LLTF…LMVV), 143–163 (LLFG…IVSG), 185–205 (VFTQ…MIFP), 219–239 (IAMA…ISVL), 269–289 (VFFM…YLYA), 306–326 (LAYP…TNFS), and 338–358 (LYIH…VAVW).

The protein belongs to the amino acid-polyamine-organocation (APC) superfamily. Spore germination protein (SGP) (TC 2.A.3.9) family.

It is found in the cell membrane. In terms of biological role, involved in the germination response to the combination of glucose, fructose, L-asparagine, and KCl. The sequence is that of Spore germination protein KB (gerKB) from Bacillus subtilis (strain 168).